The primary structure comprises 30 residues: Thermophilic aminopeptidase 1 alpha chain (30 aa).

The protein belongs to the peptidase M42 family. As to quaternary structure, 12 chains of two different but homologous types, alpha and beta, which can combine in various ratios. Requires a divalent metal cation as cofactor.

Metalloenzyme of broad specificity, releasing all N-terminal amino acids. The chain is Thermophilic aminopeptidase 1 alpha chain from Geobacillus stearothermophilus (Bacillus stearothermophilus).